The chain runs to 347 residues: 4-hydroxy-2-oxovalerate aldolase (347 aa).

One can recognise a Pyruvate carboxyltransferase domain in the interval 11–262; the sequence is PVVVDTTLRD…NPGLDVFKLL (252 aa). 19–20 is a substrate binding site; it reads RD. Aspartate 20 serves as a coordination point for Mn(2+). Catalysis depends on histidine 23, which acts as the Proton acceptor. Substrate-binding residues include serine 173 and histidine 201. Mn(2+) is bound by residues histidine 201 and histidine 203. Residue tyrosine 292 coordinates substrate.

It belongs to the 4-hydroxy-2-oxovalerate aldolase family. In terms of assembly, homodimer. Can also form a heterotetramer composed of two aldolase (TTHB246) and two dehydrogenase (TTHB247) subunits. Upon complex formation, the aldolase shows a 5-fold increase in substrate affinity, while the dehydrogenase shows a 3-fold decrease; the kcat values of each enzyme are reduced by 2-fold when they are in a complex. Co(2+) is required as a cofactor. The cofactor is Ni(2+). It depends on Mn(2+) as a cofactor.

The enzyme catalyses (S)-4-hydroxy-2-oxopentanoate = acetaldehyde + pyruvate. The catalysed reaction is (S)-4-hydroxy-2-oxohexanoate = propanal + pyruvate. Its activity is regulated as follows. Appears to be allosterically activated by NADH. Catalyzes the retro-aldol cleavage of both 4-hydroxy-2-oxopentanoate (HOPA) and 4-hydroxy-2-oxohexanoate (HOHA) to pyruvate and acetaldehyde or propanaldehyde, respectively. The aldehydes produced by this reaction are directly channeled to the dehydrogenase TTHB247, ensuring that these toxic aldehydes are sequestered from cellular components. Is involved in the meta-cleavage pathway for the degradation of aromatic compounds. Appears to be stereospecific since it can cleave (4S)-4-hydroxy-2-oxopentanoate but not the (4R) isomer. Is not able to catalyze the aldol addition of 2-oxobutyrate with acetaldehyde; this indicates that the enzyme is specific for pyruvate as the carbonyl donor. This chain is 4-hydroxy-2-oxovalerate aldolase, found in Thermus thermophilus (strain ATCC 27634 / DSM 579 / HB8).